The primary structure comprises 256 residues: Pimeloyl-[acyl-carrier protein] methyl ester esterase (256 aa).

The region spanning 15–242 (HLVLLHGWGL…AAHAPFISHP (228 aa)) is the AB hydrolase-1 domain. Residues W22, 82-83 (SL), and 143-147 (FLALQ) contribute to the substrate site. Residue S82 is the Nucleophile of the active site. Residues D207 and H235 contribute to the active site. A substrate-binding site is contributed by H235.

This sequence belongs to the AB hydrolase superfamily. Carboxylesterase BioH family. As to quaternary structure, monomer.

It localises to the cytoplasm. The enzyme catalyses 6-carboxyhexanoyl-[ACP] methyl ester + H2O = 6-carboxyhexanoyl-[ACP] + methanol + H(+). Its pathway is cofactor biosynthesis; biotin biosynthesis. Functionally, the physiological role of BioH is to remove the methyl group introduced by BioC when the pimeloyl moiety is complete. It allows to synthesize pimeloyl-ACP via the fatty acid synthetic pathway through the hydrolysis of the ester bonds of pimeloyl-ACP esters. The sequence is that of Pimeloyl-[acyl-carrier protein] methyl ester esterase from Shigella boydii serotype 18 (strain CDC 3083-94 / BS512).